We begin with the raw amino-acid sequence, 159 residues long: Ribosomal RNA large subunit methyltransferase H (159 aa).

S-adenosyl-L-methionine contacts are provided by residues Leu-76, Gly-108, and 127 to 132 (FGLLTF).

The protein belongs to the RNA methyltransferase RlmH family. In terms of assembly, homodimer.

Its subcellular location is the cytoplasm. The catalysed reaction is pseudouridine(1915) in 23S rRNA + S-adenosyl-L-methionine = N(3)-methylpseudouridine(1915) in 23S rRNA + S-adenosyl-L-homocysteine + H(+). Its function is as follows. Specifically methylates the pseudouridine at position 1915 (m3Psi1915) in 23S rRNA. In Streptococcus thermophilus (strain ATCC BAA-491 / LMD-9), this protein is Ribosomal RNA large subunit methyltransferase H.